Reading from the N-terminus, the 376-residue chain is TelA-like protein SERP0976 (376 aa).

This sequence belongs to the TelA family.

This Staphylococcus epidermidis (strain ATCC 35984 / DSM 28319 / BCRC 17069 / CCUG 31568 / BM 3577 / RP62A) protein is TelA-like protein SERP0976.